Consider the following 377-residue polypeptide: Homoserine O-acetyltransferase (377 aa).

One can recognise an AB hydrolase-1 domain in the interval 48 to 347 (NVVLIEHALT…PVGHDAFLTE (300 aa)). The Nucleophile role is filled by serine 143. Arginine 213 lines the substrate pocket. Catalysis depends on residues aspartate 311 and histidine 341. Aspartate 342 contributes to the substrate binding site.

The protein belongs to the AB hydrolase superfamily. MetX family. In terms of assembly, homodimer.

It is found in the cytoplasm. The enzyme catalyses L-homoserine + acetyl-CoA = O-acetyl-L-homoserine + CoA. It participates in amino-acid biosynthesis; L-methionine biosynthesis via de novo pathway; O-acetyl-L-homoserine from L-homoserine: step 1/1. In terms of biological role, transfers an acetyl group from acetyl-CoA to L-homoserine, forming acetyl-L-homoserine. The polypeptide is Homoserine O-acetyltransferase (Corynebacterium efficiens (strain DSM 44549 / YS-314 / AJ 12310 / JCM 11189 / NBRC 100395)).